The chain runs to 53 residues: Mitochondrial sheath formation-associated protein (53 aa).

Mitochondrial intermembrane loops occupy residues 1-6 (MIVLGW) and 1-7 (MIVLGWM). The next 2 membrane-spanning stretches (helical) occupy residues 7–23 (MLFVGLATYMGTFPEAM) and 8–24 (LFVGLATYMGTFPEAMP). Cytoplasmic loops occupy residues 24–53 (PPTLKWKERLPGQENKARRRIQALEEELLL) and 25–40 (PTLKWKERLPGQENKA).

In terms of assembly, interacts with VDAC3. As to expression, testis specific. Detected only in germ cells at the step of spermiogenesis (at protein level). Expressed during the middle steps of spermatid development. In terms of tissue distribution, testis specific. Detected only in germ cells at the step of spermiogenesis (at protein level). Expressed in the late steps of spermatid development.

The protein localises to the mitochondrion outer membrane. In terms of biological role, regulates sperm development. May be involved in mitochondrial sheath formation. In Mus musculus (Mouse), this protein is Mitochondrial sheath formation-associated protein.